Consider the following 63-residue polypeptide: UPF0434 protein BAV2101 (63 aa).

Belongs to the UPF0434 family.

The chain is UPF0434 protein BAV2101 from Bordetella avium (strain 197N).